The following is a 123-amino-acid chain: Small ribosomal subunit protein uS12 (123 aa).

3-methylthioaspartic acid is present on Asp89. The interval 104-123 is disordered; it reads TAGVQDRRQGRSKYGAKRPK. Over residues 113-123 the composition is skewed to basic residues; sequence GRSKYGAKRPK.

It belongs to the universal ribosomal protein uS12 family. As to quaternary structure, part of the 30S ribosomal subunit. Contacts proteins S8 and S17. May interact with IF1 in the 30S initiation complex.

Its function is as follows. With S4 and S5 plays an important role in translational accuracy. Interacts with and stabilizes bases of the 16S rRNA that are involved in tRNA selection in the A site and with the mRNA backbone. Located at the interface of the 30S and 50S subunits, it traverses the body of the 30S subunit contacting proteins on the other side and probably holding the rRNA structure together. The combined cluster of proteins S8, S12 and S17 appears to hold together the shoulder and platform of the 30S subunit. The polypeptide is Small ribosomal subunit protein uS12 (Oleidesulfovibrio alaskensis (strain ATCC BAA-1058 / DSM 17464 / G20) (Desulfovibrio alaskensis)).